A 229-amino-acid chain; its full sequence is Large ribosomal subunit protein uL1 (229 aa).

Belongs to the universal ribosomal protein uL1 family. As to quaternary structure, part of the 50S ribosomal subunit.

Its function is as follows. Binds directly to 23S rRNA. The L1 stalk is quite mobile in the ribosome, and is involved in E site tRNA release. Protein L1 is also a translational repressor protein, it controls the translation of the L11 operon by binding to its mRNA. The polypeptide is Large ribosomal subunit protein uL1 (Streptococcus gordonii (strain Challis / ATCC 35105 / BCRC 15272 / CH1 / DL1 / V288)).